The sequence spans 136 residues: Mediator of RNA polymerase II transcription subunit 31 (136 aa).

Positions 117–128 (AEQQQQQQPQAP) are enriched in low complexity. A disordered region spans residues 117–136 (AEQQQQQQPQAPSHANTTSK).

It belongs to the Mediator complex subunit 31 family. Component of the Mediator complex.

The protein resides in the nucleus. In terms of biological role, component of the Mediator complex, a coactivator involved in the regulated transcription of nearly all RNA polymerase II-dependent genes. Mediator functions as a bridge to convey information from gene-specific regulatory proteins to the basal RNA polymerase II transcription machinery. Mediator is recruited to promoters by direct interactions with regulatory proteins and serves as a scaffold for the assembly of a functional preinitiation complex with RNA polymerase II and the general transcription factors. The protein is Mediator of RNA polymerase II transcription subunit 31 (med31) of Danio rerio (Zebrafish).